The sequence spans 446 residues: tRNA(Ile2) 2-agmatinylcytidine synthetase TiaS (446 aa).

This sequence belongs to the TiaS family.

Its subcellular location is the cytoplasm. The catalysed reaction is cytidine(34) in tRNA(Ile2) + agmatine + ATP + H2O = 2-agmatinylcytidine(34) in tRNA(Ile2) + AMP + 2 phosphate + 2 H(+). ATP-dependent agmatine transferase that catalyzes the formation of 2-agmatinylcytidine (agm2C) at the wobble position (C34) of tRNA(Ile2), converting the codon specificity from AUG to AUA. In Cenarchaeum symbiosum (strain A), this protein is tRNA(Ile2) 2-agmatinylcytidine synthetase TiaS.